A 327-amino-acid chain; its full sequence is Trypsin-like protease try-5 (327 aa).

An N-terminal signal peptide occupies residues 1 to 21 (MRPRIIVFLFQVLVVIKGTKL). Residues 43-327 (AAGNTGNPTH…KFIVNFINQA (285 aa)) form the Peptidase S1 domain. A disulfide bridge links Cys73 with Cys89. Active-site charge relay system residues include His88 and Asp173. Asn207 is a glycosylation site (N-linked (GlcNAc...) asparagine). Cystine bridges form between Cys242–Cys256 and Cys266–Cys296. Ser270 functions as the Charge relay system in the catalytic mechanism.

It belongs to the peptidase S1 family. As to expression, specifically expressed in the male gonad including the seminal vesicle, the valve region and the vas deferens.

The protein localises to the secreted. It localises to the cytoplasmic vesicle. It is found in the secretory vesicle lumen. Its activity is regulated as follows. In the male gonad, probably maintained inactive by swm-1. Functionally, serine protease which, in males, acts as a promoting signal during mating to activate sperm. The polypeptide is Trypsin-like protease try-5 (Caenorhabditis elegans).